The primary structure comprises 960 residues: RasGEF domain-containing serine/threonine-protein kinase X (960 aa).

A Protein kinase domain is found at 21–274 (LEFNEKIGKG…FDEILSQLKV (254 aa)). ATP contacts are provided by residues 27–35 (IGKGSFGSV) and K48. The active-site Proton acceptor is the D140. The segment covering 314–368 (NISFSPNNSNNNNNNNNNISNISPDITTGIQQINLSSSGGSNNSSPSTPPQGSQL) has biased composition (low complexity). Disordered regions lie at residues 314 to 372 (NISF…VSLA) and 393 to 413 (GQLSTTPPPTSPIQSRPHKPS). Residues 437-565 (PCYAALTSHI…LGTTISNNEL (129 aa)) form the N-terminal Ras-GEF domain. The disordered stretch occupies residues 596 to 651 (NNNNNNNNNPVNNINNINNNNSVNSSSSNNNNNNNNNNSNNNNNNNNNNNNNNNNN). The Ras-GEF domain occupies 712-957 (HSTELARQIT…KNNSLKCEPP (246 aa)).

The protein belongs to the protein kinase superfamily. TKL Ser/Thr protein kinase family.

It catalyses the reaction L-seryl-[protein] + ATP = O-phospho-L-seryl-[protein] + ADP + H(+). It carries out the reaction L-threonyl-[protein] + ATP = O-phospho-L-threonyl-[protein] + ADP + H(+). Its function is as follows. Promotes the exchange of Ras-bound GDP by GTP. In Dictyostelium discoideum (Social amoeba), this protein is RasGEF domain-containing serine/threonine-protein kinase X (gefX).